A 322-amino-acid polypeptide reads, in one-letter code: Acetyl-coenzyme A carboxylase carboxyl transferase subunit alpha (322 aa).

The CoA carboxyltransferase C-terminal domain occupies 39 to 293 (RLASKSQQLT…KRALAESLRQ (255 aa)).

Belongs to the AccA family. As to quaternary structure, acetyl-CoA carboxylase is a heterohexamer composed of biotin carboxyl carrier protein (AccB), biotin carboxylase (AccC) and two subunits each of ACCase subunit alpha (AccA) and ACCase subunit beta (AccD).

The protein localises to the cytoplasm. It catalyses the reaction N(6)-carboxybiotinyl-L-lysyl-[protein] + acetyl-CoA = N(6)-biotinyl-L-lysyl-[protein] + malonyl-CoA. The protein operates within lipid metabolism; malonyl-CoA biosynthesis; malonyl-CoA from acetyl-CoA: step 1/1. Functionally, component of the acetyl coenzyme A carboxylase (ACC) complex. First, biotin carboxylase catalyzes the carboxylation of biotin on its carrier protein (BCCP) and then the CO(2) group is transferred by the carboxyltransferase to acetyl-CoA to form malonyl-CoA. The chain is Acetyl-coenzyme A carboxylase carboxyl transferase subunit alpha from Ralstonia pickettii (strain 12J).